A 1131-amino-acid polypeptide reads, in one-letter code: Tyrosine-protein kinase JAK2 (1131 aa).

Positions 1-239 (MGMACLTMTE…RYRFRRFIEQ (239 aa)) are interaction with cytokine/interferon/growth hormone receptors. The FERM domain maps to 37–380 (PVLQVYLYHS…GYYRLTADAH (344 aa)). Y119 bears the Phosphotyrosine; by autocatalysis mark. Phosphotyrosine occurs at positions 372 and 373. Positions 401–482 (HGPISMDFAI…NLKDLLNCYQ (82 aa)) constitute an SH2; atypical domain. S523 carries the post-translational modification Phosphoserine. Positions 545–809 (LIFNESLGQG…AIIRDLNSLF (265 aa)) constitute a Protein kinase 1 domain. 2 positions are modified to phosphotyrosine: Y570 and Y813. The Protein kinase 2 domain occupies 849-1126 (LKFLQQLGKG…RDLALRVDQI (278 aa)). 855-863 (LGKGNFGSV) provides a ligand contact to ATP. Y868 carries the phosphotyrosine; by autocatalysis modification. ATP is bound at residue K882. A phosphotyrosine; by autocatalysis mark is found at Y966 and Y972. D976 functions as the Proton acceptor in the catalytic mechanism. Residues Y1007 and Y1008 each carry the phosphotyrosine; by autocatalysis modification.

It belongs to the protein kinase superfamily. Tyr protein kinase family. JAK subfamily. As to quaternary structure, interacts with IL23R, SKB1 and STAM2. Interacts with EPOR. Interacts with LYN. Interacts with SIRPA. Interacts with SH2B1. Interacts with TEC. Interacts with IFNGR2 (via intracellular domain). Interacts with LEPR (Isoform B). Interacts with HSP90AB1; promotes functional activation in a heat shock-dependent manner. Interacts with STRA6. Interacts with ASB2; the interaction targets JAK2 for Notch-induced proteasomal degradation. Requires Mg(2+) as cofactor. Post-translationally, autophosphorylated, leading to regulate its activity. Leptin promotes phosphorylation on tyrosine residues, including phosphorylation on Tyr-813. Autophosphorylation on Tyr-119 in response to EPO down-regulates its kinase activity. Autophosphorylation on Tyr-868, Tyr-966 and Tyr-972 in response to growth hormone (GH) are required for maximal kinase activity. Also phosphorylated by TEC. Phosphorylated on tyrosine residues in response to interferon gamma signaling. Phosphorylated on tyrosine residues in response to a signaling cascade that is activated by increased cellular retinol. Undergoes Notch-induced ubiquitination and subsequent proteasomal degradation which is mediated by ASB1 or ASB2, the substrate-recognition components of probable ECS E3 ubiquitin-protein ligase complexes.

It localises to the endomembrane system. It is found in the cytoplasm. Its subcellular location is the nucleus. The enzyme catalyses L-tyrosyl-[protein] + ATP = O-phospho-L-tyrosyl-[protein] + ADP + H(+). Regulated by autophosphorylation, can both activate or decrease activity. Heme regulates its activity by enhancing the phosphorylation on Tyr-1007 and Tyr-1008. Functionally, non-receptor tyrosine kinase involved in various processes such as cell growth, development, differentiation or histone modifications. Mediates essential signaling events in both innate and adaptive immunity. In the cytoplasm, plays a pivotal role in signal transduction via its association with type I receptors such as growth hormone (GHR), prolactin (PRLR), leptin (LEPR), erythropoietin (EPOR), thrombopoietin (THPO); or type II receptors including IFN-alpha, IFN-beta, IFN-gamma and multiple interleukins. Following ligand-binding to cell surface receptors, phosphorylates specific tyrosine residues on the cytoplasmic tails of the receptor, creating docking sites for STATs proteins. Subsequently, phosphorylates the STATs proteins once they are recruited to the receptor. Phosphorylated STATs then form homodimer or heterodimers and translocate to the nucleus to activate gene transcription. For example, cell stimulation with erythropoietin (EPO) during erythropoiesis leads to JAK2 autophosphorylation, activation, and its association with erythropoietin receptor (EPOR) that becomes phosphorylated in its cytoplasmic domain. Then, STAT5 (STAT5A or STAT5B) is recruited, phosphorylated and activated by JAK2. Once activated, dimerized STAT5 translocates into the nucleus and promotes the transcription of several essential genes involved in the modulation of erythropoiesis. Part of a signaling cascade that is activated by increased cellular retinol and that leads to the activation of STAT5 (STAT5A or STAT5B). In addition, JAK2 mediates angiotensin-2-induced ARHGEF1 phosphorylation. Plays a role in cell cycle by phosphorylating CDKN1B. Cooperates with TEC through reciprocal phosphorylation to mediate cytokine-driven activation of FOS transcription. In the nucleus, plays a key role in chromatin by specifically mediating phosphorylation of 'Tyr-41' of histone H3 (H3Y41ph), a specific tag that promotes exclusion of CBX5 (HP1 alpha) from chromatin. Up-regulates the potassium voltage-gated channel activity of KCNA3. The chain is Tyrosine-protein kinase JAK2 from Sus scrofa (Pig).